We begin with the raw amino-acid sequence, 589 residues long: NADP-dependent malic enzyme (589 aa).

Tyrosine 137 acts as the Proton donor in catalysis. Arginine 190 provides a ligand contact to NAD(+). Lysine 208 functions as the Proton acceptor in the catalytic mechanism. Residues glutamate 280, aspartate 281, and aspartate 304 each contribute to the a divalent metal cation site. Aspartate 304 contacts NAD(+). 333-349 (LFLGAGEAGTGIAELIA) lines the NADP(+) pocket. Asparagine 445 is a binding site for NAD(+).

This sequence belongs to the malic enzymes family. In terms of assembly, homotetramer. Mg(2+) is required as a cofactor. It depends on Mn(2+) as a cofactor.

It is found in the cytoplasm. It carries out the reaction (S)-malate + NADP(+) = pyruvate + CO2 + NADPH. The enzyme catalyses oxaloacetate + H(+) = pyruvate + CO2. In Phaseolus vulgaris (Kidney bean), this protein is NADP-dependent malic enzyme (ME1).